The primary structure comprises 235 residues: Voltage-gated hydrogen channel 1 (235 aa).

The Cytoplasmic portion of the chain corresponds to 1 to 65 (MSRYLKHFTA…SLRKLYSTER (65 aa)). A helical transmembrane segment spans residues 66–86 (FQIVVVCLVVLDAIFVLCELL). Residues 87-103 (IDLSIIEADHHRIAPQV) lie on the Extracellular side of the membrane. Residues 104 to 126 (FHYLSLALLTFFMVELAGKIFAY) traverse the membrane as a helical segment. Residues 127 to 134 (RLEFLHHK) are Cytoplasmic-facing. Residues 135-155 (FEVFDGIVVVVSFILDIIYIS) form a helical membrane-spanning segment. The Extracellular portion of the chain corresponds to 156–162 (KEDAFDA). Residues 163–183 (MGLLILLRLWRVARIINGILV) traverse the membrane as a helical segment. Residues 184–235 (SVQNRANHRVEKLKEINESLVHQVNELKEQNTKMDQENVRLRALLKDHSIDF) are Cytoplasmic-facing. A coiled-coil region spans residues 187 to 231 (NRANHRVEKLKEINESLVHQVNELKEQNTKMDQENVRLRALLKDH).

It belongs to the hydrogen channel family. In terms of assembly, homodimer.

The protein localises to the membrane. It localises to the cell membrane. In terms of biological role, mediates the voltage-dependent proton permeability of excitable membranes. Forms a proton-selective channel through which protons may pass in accordance with their electrochemical gradient. The chain is Voltage-gated hydrogen channel 1 (hvcn1) from Danio rerio (Zebrafish).